The chain runs to 546 residues: Chaperonin GroEL (546 aa).

Residues 29–32 (TLGP), K50, 86–90 (DGTTT), G414, and D494 contribute to the ATP site. Residues 525–546 (KKESAAPAMPGHDGMGGMGGMM) are disordered. Gly residues predominate over residues 537–546 (DGMGGMGGMM).

This sequence belongs to the chaperonin (HSP60) family. As to quaternary structure, forms a cylinder of 14 subunits composed of two heptameric rings stacked back-to-back. Interacts with the co-chaperonin GroES.

It localises to the cytoplasm. It carries out the reaction ATP + H2O + a folded polypeptide = ADP + phosphate + an unfolded polypeptide.. In terms of biological role, together with its co-chaperonin GroES, plays an essential role in assisting protein folding. The GroEL-GroES system forms a nano-cage that allows encapsulation of the non-native substrate proteins and provides a physical environment optimized to promote and accelerate protein folding. This chain is Chaperonin GroEL, found in Bdellovibrio bacteriovorus (strain ATCC 15356 / DSM 50701 / NCIMB 9529 / HD100).